Consider the following 342-residue polypeptide: Holliday junction branch migration complex subunit RuvB (342 aa).

The tract at residues 1 to 181 (MENRMVTPFD…FGMLCAMEFY (181 aa)) is large ATPase domain (RuvB-L). ATP contacts are provided by residues L20, R21, G62, K65, T66, T67, 128 to 130 (EDY), R171, Y181, and R218. Mg(2+) is bound at residue T66. A small ATPAse domain (RuvB-S) region spans residues 182–252 (TDEELMEIVV…GAKAALDLLE (71 aa)). Residues 255-342 (KEGLDKIDNK…KDNQVSIFNK (88 aa)) are head domain (RuvB-H). Residues R310 and R315 each coordinate DNA.

This sequence belongs to the RuvB family. Homohexamer. Forms an RuvA(8)-RuvB(12)-Holliday junction (HJ) complex. HJ DNA is sandwiched between 2 RuvA tetramers; dsDNA enters through RuvA and exits via RuvB. An RuvB hexamer assembles on each DNA strand where it exits the tetramer. Each RuvB hexamer is contacted by two RuvA subunits (via domain III) on 2 adjacent RuvB subunits; this complex drives branch migration. In the full resolvosome a probable DNA-RuvA(4)-RuvB(12)-RuvC(2) complex forms which resolves the HJ.

It localises to the cytoplasm. The catalysed reaction is ATP + H2O = ADP + phosphate + H(+). In terms of biological role, the RuvA-RuvB-RuvC complex processes Holliday junction (HJ) DNA during genetic recombination and DNA repair, while the RuvA-RuvB complex plays an important role in the rescue of blocked DNA replication forks via replication fork reversal (RFR). RuvA specifically binds to HJ cruciform DNA, conferring on it an open structure. The RuvB hexamer acts as an ATP-dependent pump, pulling dsDNA into and through the RuvAB complex. RuvB forms 2 homohexamers on either side of HJ DNA bound by 1 or 2 RuvA tetramers; 4 subunits per hexamer contact DNA at a time. Coordinated motions by a converter formed by DNA-disengaged RuvB subunits stimulates ATP hydrolysis and nucleotide exchange. Immobilization of the converter enables RuvB to convert the ATP-contained energy into a lever motion, pulling 2 nucleotides of DNA out of the RuvA tetramer per ATP hydrolyzed, thus driving DNA branch migration. The RuvB motors rotate together with the DNA substrate, which together with the progressing nucleotide cycle form the mechanistic basis for DNA recombination by continuous HJ branch migration. Branch migration allows RuvC to scan DNA until it finds its consensus sequence, where it cleaves and resolves cruciform DNA. The sequence is that of Holliday junction branch migration complex subunit RuvB from Clostridium botulinum (strain Loch Maree / Type A3).